Here is a 317-residue protein sequence, read N- to C-terminus: MESPPMFNSVEDECRYWKERSKQYHKEWTDVKQEYDEFVEQSREMEIEMDATLDQKQSIIKDLTAKLTMFERENESLKLKLESHGIDMSNMEKQLETVKKDRDTMKVYLRQLEQKNDDLERAHRILNESIENFEKMLDQAYEKNALLELEVDEKGLLQEKLQRLMDETRDLKQELNVKSRFTPVVNGTSVPTANDTNTVNSSMNSSASLPNGIVANGELVKHDNAVATRATSVSVNALNGSLVNRNEYNQQHSLKSDGDETEDVPREWSANAAATPLLPAIHTSGAGRTALLLAGCRVVWILQFSVIHKPQIRNPIT.

Positions 29 to 180 (TDVKQEYDEF…LKQELNVKSR (152 aa)) form a coiled coil. The disordered stretch occupies residues 186–205 (NGTSVPTANDTNTVNSSMNS).

This sequence belongs to the nudE family.

The protein resides in the cytoplasm. It is found in the cytoskeleton. Its subcellular location is the microtubule organizing center. The protein localises to the centrosome. It localises to the spindle. In terms of biological role, chaperone protein with functions in nuclear localization. Required for centrosome duplication and formation and function of the mitotic spindle. In postmitotic neurons, acts with nudC downstream of dar1 to ensure correct positioning of the nuclei in primary dendrites and as a consequence, is required for determining multipolar neuron morphology. This is Nuclear distribution protein nudE homolog from Drosophila melanogaster (Fruit fly).